The primary structure comprises 349 residues: Anthranilate phosphoribosyltransferase (349 aa).

5-phospho-alpha-D-ribose 1-diphosphate contacts are provided by residues G82, 85-86, 92-95, 110-118, and S122; these read GD, NVST, and KHGNRAVSG. Position 82 (G82) interacts with anthranilate. S94 lines the Mg(2+) pocket. N113 is a binding site for anthranilate. Anthranilate is bound at residue R168. Residues D227 and E228 each contribute to the Mg(2+) site.

This sequence belongs to the anthranilate phosphoribosyltransferase family. In terms of assembly, homodimer. Requires Mg(2+) as cofactor.

It carries out the reaction N-(5-phospho-beta-D-ribosyl)anthranilate + diphosphate = 5-phospho-alpha-D-ribose 1-diphosphate + anthranilate. Its pathway is amino-acid biosynthesis; L-tryptophan biosynthesis; L-tryptophan from chorismate: step 2/5. In terms of biological role, catalyzes the transfer of the phosphoribosyl group of 5-phosphorylribose-1-pyrophosphate (PRPP) to anthranilate to yield N-(5'-phosphoribosyl)-anthranilate (PRA). The protein is Anthranilate phosphoribosyltransferase of Pseudomonas fluorescens (strain ATCC BAA-477 / NRRL B-23932 / Pf-5).